We begin with the raw amino-acid sequence, 220 residues long: UPF0319 protein YccT (220 aa).

Residues 1 to 20 (MKTGALTTFLALCLPVTVFA) form the signal peptide.

It belongs to the UPF0319 family.

This is UPF0319 protein YccT from Salmonella schwarzengrund (strain CVM19633).